The primary structure comprises 65 residues: Beta-defensin 106A (65 aa).

The N-terminal stretch at methionine 1–alanine 20 is a signal peptide. 3 disulfide bridges follow: cysteine 26/cysteine 53, cysteine 33/cysteine 47, and cysteine 37/cysteine 54.

This sequence belongs to the beta-defensin family. Monomer. Interacts with CCR2 (via extracellular N-terminal region); this interaction may preferentially require specific tyrosine sulfation on CCR2.

Its subcellular location is the secreted. It is found in the membrane. Has antibacterial activity. Acts as a ligand for C-C chemokine receptor CCR2. This is Beta-defensin 106A (DEFB106A) from Hylobates lar (Lar gibbon).